Here is a 122-residue protein sequence, read N- to C-terminus: uncharacterized protein (122 aa).

The span at Met-1–Leu-10 shows a compositional bias: polar residues. Residues Met-1–Gly-68 form a disordered region. Positions Gln-40–Asp-56 are enriched in basic and acidic residues.

This is an uncharacterized protein from Bos taurus (Bovine).